We begin with the raw amino-acid sequence, 423 residues long: Serine hydroxymethyltransferase (423 aa).

Residues leucine 120 and 124 to 126 contribute to the (6S)-5,6,7,8-tetrahydrofolate site; that span reads GHL. Lysine 229 carries the N6-(pyridoxal phosphate)lysine modification. Residue 353–355 participates in (6S)-5,6,7,8-tetrahydrofolate binding; the sequence is SPF.

This sequence belongs to the SHMT family. Homodimer. It depends on pyridoxal 5'-phosphate as a cofactor.

The protein resides in the cytoplasm. It catalyses the reaction (6R)-5,10-methylene-5,6,7,8-tetrahydrofolate + glycine + H2O = (6S)-5,6,7,8-tetrahydrofolate + L-serine. Its pathway is one-carbon metabolism; tetrahydrofolate interconversion. The protein operates within amino-acid biosynthesis; glycine biosynthesis; glycine from L-serine: step 1/1. Functionally, catalyzes the reversible interconversion of serine and glycine with tetrahydrofolate (THF) serving as the one-carbon carrier. This reaction serves as the major source of one-carbon groups required for the biosynthesis of purines, thymidylate, methionine, and other important biomolecules. Also exhibits THF-independent aldolase activity toward beta-hydroxyamino acids, producing glycine and aldehydes, via a retro-aldol mechanism. This chain is Serine hydroxymethyltransferase, found in Synechococcus sp. (strain RCC307).